The primary structure comprises 476 residues: MAQYSAEFKQAKVLVLGDVMLDRYWFGATNRISPEAPVPVVRVQENEERAGGAANVAMNIASLNVSVQLMGLIGQDETGSALSLLLEKQKIDCNFVALETHPTITKLRILSRHQQLLRLDFEEDFNNVDCKDLLAKLESAVKNYGALILSDYGKGTLKDVQKMIQIARKANVPVLIDPKGTDFERYRGATLLTPNMSEFEAVVGKCNTEEEIIKKGLKLISDIELTALLVTRSEKGMTLLRPNQEPYHLPTVAKEVFDVTGAGDTVISVLATALADGRSFEESCYLANVAAGIVVGKLGTSTVSTVELENAIHARPETGFGIMSEAELKDAVAQAKARGEKIVMTNGCFDILHPGHISYLENARKLGDRLIVAVNSDDSVKRLKGESRPINNLENRMAVLAGLASVDWLVPFTEDTPQRLIGEILPDLLVKGGDYKPEEIAGSKEVWANGGDVKVLNFENGCSTTNVIEKIKLLKD.

The ribokinase stretch occupies residues 1 to 318 (MAQYSAEFKQ…ENAIHARPET (318 aa)). Position 195-198 (195-198 (NMSE)) interacts with ATP. Aspartate 264 is a catalytic residue. The segment at 344 to 476 (MTNGCFDILH…VIEKIKLLKD (133 aa)) is cytidylyltransferase.

This sequence in the N-terminal section; belongs to the carbohydrate kinase PfkB family. In the C-terminal section; belongs to the cytidylyltransferase family. In terms of assembly, homodimer.

The catalysed reaction is D-glycero-beta-D-manno-heptose 7-phosphate + ATP = D-glycero-beta-D-manno-heptose 1,7-bisphosphate + ADP + H(+). The enzyme catalyses D-glycero-beta-D-manno-heptose 1-phosphate + ATP + H(+) = ADP-D-glycero-beta-D-manno-heptose + diphosphate. The protein operates within nucleotide-sugar biosynthesis; ADP-L-glycero-beta-D-manno-heptose biosynthesis; ADP-L-glycero-beta-D-manno-heptose from D-glycero-beta-D-manno-heptose 7-phosphate: step 1/4. It functions in the pathway nucleotide-sugar biosynthesis; ADP-L-glycero-beta-D-manno-heptose biosynthesis; ADP-L-glycero-beta-D-manno-heptose from D-glycero-beta-D-manno-heptose 7-phosphate: step 3/4. Its function is as follows. Catalyzes the phosphorylation of D-glycero-D-manno-heptose 7-phosphate at the C-1 position to selectively form D-glycero-beta-D-manno-heptose-1,7-bisphosphate. Functionally, catalyzes the ADP transfer from ATP to D-glycero-beta-D-manno-heptose 1-phosphate, yielding ADP-D-glycero-beta-D-manno-heptose. The sequence is that of Bifunctional protein HldE from Haemophilus influenzae (strain 86-028NP).